The primary structure comprises 497 residues: Protein adenylyltransferase Fic (497 aa).

The interval 1 to 30 is disordered; that stretch reads MGATDQALEAESKTTEPPKTPPVPEQHDRP. Residues 38 to 58 traverse the membrane as a helical segment; that stretch reads LCHLLVLLFSGGLAAITLHIF. TPR repeat units lie at residues 123–156 and 157–191; these read ALGALRLAQDMYLAGKDDKAARLFQHSLALAPRH and PTVLLRYGEFLEHSQRNIVLADQYYFQALSISPSN. An Inhibitory (S/T)XXXE(G/N) motif motif is present at residues 248-253; sequence TVGIEG. ATP-binding positions include E252 and 333-336; that span reads VGGH. Residues 302-437 enclose the Fido domain; sequence ITIKDILELH…IRPFVRFIAD (136 aa). H380 is a catalytic residue. ATP is bound by residues 384-391, 416-417, and N424; these read DGNGRTSR and YY. Residues 468–497 form a disordered region; sequence GEGVPQLQSSQMGGGASIPEFHESGSGSLP.

Belongs to the fic family. Homodimer.

It localises to the membrane. The catalysed reaction is L-tyrosyl-[protein] + ATP = O-(5'-adenylyl)-L-tyrosyl-[protein] + diphosphate. It catalyses the reaction L-threonyl-[protein] + ATP = 3-O-(5'-adenylyl)-L-threonyl-[protein] + diphosphate. The enzyme catalyses 3-O-(5'-adenylyl)-L-threonyl-[protein] + H2O = L-threonyl-[protein] + AMP + H(+). The side chain of Glu-252 determines which of the two opposing activities (AMPylase or de-AMPylase) will take place. In response to endoplasmic reticulum stress, mediates de-AMPylase activity. Adenylyltransferase activity is inhibited by the inhibitory helix present at the N-terminus: Glu-252 binds ATP and competes with ATP-binding at Arg-391, thereby preventing adenylyltransferase activity. In unstressed cells, disengagement of Glu-252 promotes adenylyltransferase activity. Activation dissociates ATP-binding from Glu-252, allowing ordered binding of the entire ATP moiety with the alpha-phosphate in an orientation that is productive for accepting an incoming target hydroxyl side chain. Functionally, protein that can both mediate the addition of adenosine 5'-monophosphate (AMP) to specific residues of target proteins (AMPylation), and the removal of the same modification from target proteins (de-AMPylation), depending on the context. The side chain of Glu-252 determines which of the two opposing activities (AMPylase or de-AMPylase) will take place. Acts as a key regulator of the unfolded protein response (UPR) by mediating AMPylation or de-AMPylation of Hsc70-3/BiP. In unstressed cells, acts as an adenylyltransferase by mediating AMPylation of Hsc70-3/BiP at 'Thr-518', thereby inactivating it. In response to endoplasmic reticulum stress, acts as a phosphodiesterase by mediating removal of ATP (de-AMPylation) from Hsc70-3/BiP at 'Thr-518', leading to restore HSPA5/BiP activity. The polypeptide is Protein adenylyltransferase Fic (Drosophila ananassae (Fruit fly)).